Here is a 276-residue protein sequence, read N- to C-terminus: Kallikrein-10 (276 aa).

A signal peptide spans 1–30; the sequence is MRAPHLHLSAASGARALAKLLPLLMAQLWA. Asn-39 carries an N-linked (GlcNAc...) asparagine glycan. A Peptidase S1 domain is found at 47–274; it reads AYGSPCARGS…YMSWINKVIR (228 aa). 5 disulfide bridges follow: Cys-52/Cys-162, Cys-71/Cys-87, Cys-169/Cys-235, Cys-201/Cys-215, and Cys-225/Cys-250. Active-site charge relay system residues include His-86 and Asp-137. Residue Ser-229 is the Charge relay system of the active site.

Belongs to the peptidase S1 family. Kallikrein subfamily. As to expression, expressed in breast, ovary and prostate.

It localises to the secreted. Its function is as follows. Has a tumor-suppressor role for NES1 in breast and prostate cancer. The chain is Kallikrein-10 (KLK10) from Homo sapiens (Human).